The primary structure comprises 229 residues: UPF0758 protein Caur_3603 (229 aa).

The region spanning 105–227 (PIRSPADVAT…YVSLRERGLG (123 aa)) is the MPN domain. 3 residues coordinate Zn(2+): histidine 176, histidine 178, and aspartate 189. Positions 176 to 189 (HNHPSGEPTPSMED) match the JAMM motif motif.

Belongs to the UPF0758 family.

The polypeptide is UPF0758 protein Caur_3603 (Chloroflexus aurantiacus (strain ATCC 29366 / DSM 635 / J-10-fl)).